Consider the following 117-residue polypeptide: cAMP-regulated phosphoprotein 19-A (117 aa).

Basic and acidic residues predominate over residues 1 to 37; sequence MSGENQETKAQEESSALEQKEIDDKVVSPEKSEEIKL. The interval 1 to 54 is disordered; it reads MSGENQETKAQEESSALEQKEIDDKVVSPEKSEEIKLKARYPNLGPKPGGSDFL. Residue serine 28 is modified to Phosphoserine; by CDK2. Phosphoserine; by GWL is present on serine 67. Residues 78-117 are disordered; the sequence is KNKQLPTAASDKTEVTGDHIPTPQDLPQRKPSLVASKLAG. Threonine 99 is subject to Phosphothreonine; by CDK2. Serine 109 is subject to Phosphoserine; by PKA.

This sequence belongs to the endosulfine family. Interacts (when phosphorylated at Ser-67) with ppp2r2d. Post-translationally, phosphorylation at Ser-67 by gwl during mitosis is essential for interaction with ppp2r2d (PR55-delta) and subsequent inactivation of PP2A. Phosphorylated by PKA.

It localises to the cytoplasm. Its function is as follows. Protein phosphatase inhibitor that specifically inhibits protein phosphatase 2A (PP2A) during mitosis. When phosphorylated at Ser-67 during mitosis, specifically interacts with ppp2r2d (PR55-delta) and inhibits its activity, leading to inactivation of PP2A, an essential condition to keep cyclin-B1-CDK1 activity high during M phase. The sequence is that of cAMP-regulated phosphoprotein 19-A (arpp19-a) from Xenopus laevis (African clawed frog).